A 91-amino-acid polypeptide reads, in one-letter code: DNA-directed RNA polymerase subunit Rpo11 (91 aa).

The protein belongs to the archaeal Rpo11/eukaryotic RPB11/RPC19 RNA polymerase subunit family. In terms of assembly, part of the RNA polymerase complex.

It is found in the cytoplasm. The catalysed reaction is RNA(n) + a ribonucleoside 5'-triphosphate = RNA(n+1) + diphosphate. Its function is as follows. DNA-dependent RNA polymerase (RNAP) catalyzes the transcription of DNA into RNA using the four ribonucleoside triphosphates as substrates. The polypeptide is DNA-directed RNA polymerase subunit Rpo11 (Methanothrix thermoacetophila (strain DSM 6194 / JCM 14653 / NBRC 101360 / PT) (Methanosaeta thermophila)).